Reading from the N-terminus, the 416-residue chain is Argininosuccinate synthase (416 aa).

ATP contacts are provided by residues 19–27 and alanine 46; that span reads AYSGGLDTS. 2 residues coordinate L-citrulline: tyrosine 97 and serine 102. Glycine 127 is a binding site for ATP. Threonine 129, asparagine 133, and aspartate 134 together coordinate L-aspartate. Asparagine 133 serves as a coordination point for L-citrulline. Residues arginine 137, serine 188, serine 197, glutamate 273, and tyrosine 285 each contribute to the L-citrulline site.

The protein belongs to the argininosuccinate synthase family. Type 1 subfamily. Homotetramer.

The protein localises to the cytoplasm. The enzyme catalyses L-citrulline + L-aspartate + ATP = 2-(N(omega)-L-arginino)succinate + AMP + diphosphate + H(+). Its pathway is amino-acid biosynthesis; L-arginine biosynthesis; L-arginine from L-ornithine and carbamoyl phosphate: step 2/3. The chain is Argininosuccinate synthase from Granulibacter bethesdensis (strain ATCC BAA-1260 / CGDNIH1).